A 100-amino-acid chain; its full sequence is Mitochondrial zinc maintenance protein 1, mitochondrial (100 aa).

This sequence belongs to the complex I LYR family. MZM1 subfamily. In terms of assembly, interacts with RIP1.

It localises to the mitochondrion matrix. Assembly factor required for Rieske Fe-S protein RIP1 incorporation into the cytochrome b-c1 (CIII) complex. Functions as a chaperone, binding to this subunit within the mitochondrial matrix and stabilizing it prior to its translocation and insertion into the late CIII dimeric intermediate within the mitochondrial inner membrane. Modulates the mitochondrial matrix zinc pool. This Schizosaccharomyces pombe (strain 972 / ATCC 24843) (Fission yeast) protein is Mitochondrial zinc maintenance protein 1, mitochondrial (new18).